Reading from the N-terminus, the 674-residue chain is ATP-dependent DNA helicase Hel308 (674 aa).

Residues Q27 and 44 to 51 (VPTAAGKT) each bind ATP. Residues 31-197 (IEQFRKGKNI…WLNASLIKSS (167 aa)) enclose the Helicase ATP-binding domain. The DEAH box signature appears at 142–145 (DEIH). The Helicase C-terminal domain maps to 224 to 411 (DINLLVKETV…PEKVRFNTLA (188 aa)).

The protein belongs to the helicase family. Hel308 subfamily. In terms of assembly, monomer.

The enzyme catalyses Couples ATP hydrolysis with the unwinding of duplex DNA by translocating in the 3'-5' direction.. It carries out the reaction ATP + H2O = ADP + phosphate + H(+). In terms of biological role, DNA-dependent ATPase and 3'-5' DNA helicase that may be involved in repair of stalled replication forks. The polypeptide is ATP-dependent DNA helicase Hel308 (Thermoplasma volcanium (strain ATCC 51530 / DSM 4299 / JCM 9571 / NBRC 15438 / GSS1)).